Consider the following 99-residue polypeptide: DNA-directed RNA polymerase subunit omega (99 aa).

It belongs to the RNA polymerase subunit omega family. As to quaternary structure, the RNAP catalytic core consists of 2 alpha, 1 beta, 1 beta' and 1 omega subunit. When a sigma factor is associated with the core the holoenzyme is formed, which can initiate transcription.

It carries out the reaction RNA(n) + a ribonucleoside 5'-triphosphate = RNA(n+1) + diphosphate. Functionally, promotes RNA polymerase assembly. Latches the N- and C-terminal regions of the beta' subunit thereby facilitating its interaction with the beta and alpha subunits. This is DNA-directed RNA polymerase subunit omega from Thermus thermophilus (strain ATCC BAA-163 / DSM 7039 / HB27).